Reading from the N-terminus, the 500-residue chain is Oogenesin-3 (500 aa).

One copy of the LRR 1; degenerate repeat lies at 116 to 143; it reads RCKLRVLKWRDEQHDFCGIWPGSHEAED. One copy of the LRR 2; degenerate repeat lies at 198–222; the sequence is HLLCRKLVIETLTKDTVIEIFKIVN. One copy of the LRR 3; degenerate repeat lies at 223–248; the sequence is ADCIQELELYSLCLEDLAFLNPYLRQ. The stretch at 249 to 285 is one LRR 4; degenerate repeat; it reads MDNLLELTLDHVTDSLSMGDSEMCEEEMITLVSQLPT. LRR repeat units follow at residues 286 to 311, 312 to 343, 344 to 367, 368 to 395, and 396 to 420; these read FPCLQKLCVNDVYFIYGNLNEILRCL, KKPLVSFCISNCELSQSDLDCLPYCLNIFELK, CLYLIDIPLNHLCLDPLGFLLESV, RHTLECLELKSCDMGEPQFNALLPALSQ, and CSHLTDVSFWENELSLLFLKQLLQH.

It belongs to the PRAME family. In terms of tissue distribution, expressed in ovary, specifically in oocytes. Detected in follicles with two layers of granulosa cells, and are present in early as well as large antral follicles.

This is Oogenesin-3 from Mus musculus (Mouse).